Reading from the N-terminus, the 125-residue chain is Large ribosomal subunit protein bL12 (125 aa).

Belongs to the bacterial ribosomal protein bL12 family. Homodimer. Part of the ribosomal stalk of the 50S ribosomal subunit. Forms a multimeric L10(L12)X complex, where L10 forms an elongated spine to which 2 to 4 L12 dimers bind in a sequential fashion. Binds GTP-bound translation factors.

Its function is as follows. Forms part of the ribosomal stalk which helps the ribosome interact with GTP-bound translation factors. Is thus essential for accurate translation. This is Large ribosomal subunit protein bL12 from Heliobacterium modesticaldum (strain ATCC 51547 / Ice1).